A 1140-amino-acid chain; its full sequence is MSYNYVVTAQKPTAVNGCVTGHFTSAEDINLLIAKNTRLEIYVVTAEGLRPVKEVGMYGKIAVMELFRPKGESKDLLFILTAKYNACILEYKQSGESIDIITRAHGNVQDRIGRPSETGIIGIIDPECRMIGLRLYDGLFKVIPLDRDNKELKAFNIRLEELHVIDVKFLYGCQAPTICFVYQDPQGRHVKTYEVSLREKEFNKGPWKQENVEAEASMVIAVPEPFGGAIIIGQESITYHNGDKYLAIAPPIIKQSTIVCHNRVDPNGSRYLLGDMEGRLFMLLLEKEEQMDGTVTLKDLRVELLGETSIAECLTYLDNGVVFVGSRLGDSQPVKLNVDSNEQGSYVVAMETFTNLGPIVDMCVVDLERQGQGQLVTCSGAFKEGSLRIIRNGIGIHEHASIDLPGIKGLWPLRSDPNRETDDTLVLSFVGQTRVLMLNGEEVEETELMGFVDDQQTFFCGNVAHQQLIQITSASVRLVSQEPKALVSEWKEPRAKNISVASCNSSQVVVAVGRALYYLQIHPQELRQISHTEMEHEVACLDVTPLGDSNGLSPLCAIGLWTDISARILKLPSFELLHKEMLGGEIIPRSILMTTFESSHYLLCALGDGALFYFGLNIETGLLSDRKKVTLGTQPTVLRTFRSLSTTNVFACSDRPTVIYSSNHKLVFSNVNLKEVNYMCPLNSDGYPDSLALANTSTLTIGTMNEIQKLHIRTVPIYESPRKICYQEVSQCFGVLSTRIEVQDTSGGTTALRPSASTQALSSSVSSSKLFSSSAAPHETSFGEEVEVHNLLIIDQHTFEVLHAHQFLQNEYALSLVSCKLGKDPNTYFIVGTAMVYPEEAEPKQGRIVVFQYSGGKLQTVAEKEVKGAVYSMVEFNGKLLASINSTVRLYEWTTEKELRTECNHYNNIMALYLKTKGDFILVGDLMRSVLLLAYKPMEGNFEEIARDFNPNWMSAVEILDDDNFLGAENAFNLFVCQKDSAATTDEERQHLQEVGLFHLGEFVNVFCHGSLVMQNLGETSTPTQGSVLLGTVNGMIGLVTSLSESWYNLLLDMQNRLNKVIKSVGKIEHSFWRSFHTERKTEPATGFIDGDLIESFLDISRPKMQEVVANLQYDDGSGMKREATADDLIKVVEELTRIH.

An N-acetylserine modification is found at S2. Positions 2-768 are interaction with CDT1; sequence SYNYVVTAQK…QALSSSVSSS (767 aa). The tract at residues 13–356 is WD repeat beta-propeller A; it reads TAVNGCVTGH…VVAMETFTNL (344 aa). The interval 391–708 is WD repeat beta-propeller B; Interaction with CUL4A; the sequence is RNGIGIHEHA…LTIGTMNEIQ (318 aa). The WD repeat beta-propeller C stretch occupies residues 709–1043; it reads KLHIRTVPIY…NGMIGLVTSL (335 aa). An interaction with CDT1 and CUL4A region spans residues 771 to 1140; it reads FSSSAAPHET…KVVEELTRIH (370 aa). K1067 carries the post-translational modification N6-acetyllysine. K1121 is covalently cross-linked (Glycyl lysine isopeptide (Lys-Gly) (interchain with G-Cter in SUMO2)). Residue T1125 is modified to Phosphothreonine.

It belongs to the DDB1 family. In terms of assembly, component of the UV-DDB complex which includes DDB1 and DDB2; the heterodimer dimerizes to give rise to a heterotetramer when bound to damaged DNA. The UV-DDB complex interacts with monoubiquitinated histone H2A and binds to XPC via the DDB2 subunit. Component of numerous DCX (DDB1-CUL4-X-box) E3 ubiquitin-protein ligase complexes which consist of a core of DDB1, CUL4A or CUL4B and RBX1. DDB1 may recruit specific substrate targeting subunits to the DCX complex. These substrate targeting subunits are generally known as DCAF (DDB1- and CUL4-associated factor) or CDW (CUL4-DDB1-associated WD40-repeat) proteins. Interacts with AMBRA1, ATG16L1, BTRC, CRBN, DCAF1, DCAF4, DCAF5, DCAF6, DCAF7, DCAF8, DCAF9, DCAF10, DCAF11, DCAF12, DCAF15, DCAF16, DCAF17, DDA1, DET1, DTL, ERCC8, FBXW5, FBXW8, GRWD1, KATNB1, NLE1, NUP43, PAFAH1B1, PHIP, PWP1, RBBP4, RBBP5, RBBP7, COP1, SNRNP40, DCAF1, WDR5, WDR5B, WDR12, WDR26, WDR39, WDR42, WDR53, WDR59, WDR61, WSB1, WSB2, LRWD1 and WDTC1. DCX complexes may associate with the COP9 signalosome, and this inhibits the E3 ubiquitin-protein ligase activity of the complex. Interacts with NF2, TSC1 and TSC2. Interacts with AGO1 and AGO2. Associates with the E3 ligase complex containing DYRK2, EDD/UBR5, DDB1 and DCAF1 proteins (EDVP complex). Interacts directly with DYRK2. DCX(DTL) complex interacts with FBXO11; does not ubiquitinate and degradate FBXO11. Interacts with TRPC4AP. Interacts with CRY1 and CRY2. The DDB1-CUL4A complex interacts with CRY1. May also interact with DCUN1D1, DCUN1D2, DCUN1D3 and DCUN1D5. Component of the DCX(DCAF13) E3 ubiquitin ligase complex, at least composed of CUL4 (CUL4A or CUL4B), DDB1, DCAF13 and RBX1. Interacts with DCAF13 (via WD40 domain). Phosphorylated by ABL1. In terms of processing, ubiquitinated by CUL4A. Subsequently degraded by ubiquitin-dependent proteolysis. Post-translationally, acetylated, promoting interaction with CUL4 (CUL4A or CUL4B) and subsequent formation of DCX (DDB1-CUL4-X-box) E3 ubiquitin-protein ligase complexes. Deacetylation by SIRT7 impairs the interaction with CUL4 (CUL4A or CUL4B) and formation of DCX (DDB1-CUL4-X-box) E3 ubiquitin-protein ligase complexes.

It localises to the cytoplasm. The protein resides in the nucleus. It participates in protein modification; protein ubiquitination. Its function is as follows. Protein, which is both involved in DNA repair and protein ubiquitination, as part of the UV-DDB complex and DCX (DDB1-CUL4-X-box) complexes, respectively. Core component of the UV-DDB complex (UV-damaged DNA-binding protein complex), a complex that recognizes UV-induced DNA damage and recruit proteins of the nucleotide excision repair pathway (the NER pathway) to initiate DNA repair. The UV-DDB complex preferentially binds to cyclobutane pyrimidine dimers (CPD), 6-4 photoproducts (6-4 PP), apurinic sites and short mismatches. Also functions as a component of numerous distinct DCX (DDB1-CUL4-X-box) E3 ubiquitin-protein ligase complexes which mediate the ubiquitination and subsequent proteasomal degradation of target proteins. The functional specificity of the DCX E3 ubiquitin-protein ligase complex is determined by the variable substrate recognition component recruited by DDB1. DCX(DDB2) (also known as DDB1-CUL4-ROC1, CUL4-DDB-ROC1 and CUL4-DDB-RBX1) may ubiquitinate histone H2A, histone H3 and histone H4 at sites of UV-induced DNA damage. The ubiquitination of histones may facilitate their removal from the nucleosome and promote subsequent DNA repair. DCX(DDB2) also ubiquitinates XPC, which may enhance DNA-binding by XPC and promote NER. DCX(DTL) plays a role in PCNA-dependent polyubiquitination of CDT1 and MDM2-dependent ubiquitination of TP53 in response to radiation-induced DNA damage and during DNA replication. DCX(ERCC8) (the CSA complex) plays a role in transcription-coupled repair (TCR). The DDB1-CUL4A-DTL E3 ligase complex regulates the circadian clock function by mediating the ubiquitination and degradation of CRY1. DDB1-mediated CRY1 degradation promotes FOXO1 protein stability and FOXO1-mediated gluconeogenesis in the liver. By acting on TET dioxygenses, essential for oocyte maintenance at the primordial follicle stage, hence essential for female fertility. Maternal factor required for proper zygotic genome activation and genome reprogramming. The polypeptide is DNA damage-binding protein 1 (Ddb1) (Rattus norvegicus (Rat)).